Here is a 95-residue protein sequence, read N- to C-terminus: Integration host factor subunit beta (95 aa).

This sequence belongs to the bacterial histone-like protein family. In terms of assembly, heterodimer of an alpha and a beta chain.

Its function is as follows. This protein is one of the two subunits of integration host factor, a specific DNA-binding protein that functions in genetic recombination as well as in transcriptional and translational control. The sequence is that of Integration host factor subunit beta from Shewanella putrefaciens (strain CN-32 / ATCC BAA-453).